Reading from the N-terminus, the 419-residue chain is Serine hydroxymethyltransferase (419 aa).

Residues Leu-121 and 125 to 127 (GHL) each bind (6S)-5,6,7,8-tetrahydrofolate. Position 229 is an N6-(pyridoxal phosphate)lysine (Lys-229). 354 to 356 (SPF) contacts (6S)-5,6,7,8-tetrahydrofolate.

It belongs to the SHMT family. As to quaternary structure, homodimer. The cofactor is pyridoxal 5'-phosphate.

The protein resides in the cytoplasm. The enzyme catalyses (6R)-5,10-methylene-5,6,7,8-tetrahydrofolate + glycine + H2O = (6S)-5,6,7,8-tetrahydrofolate + L-serine. The protein operates within one-carbon metabolism; tetrahydrofolate interconversion. It functions in the pathway amino-acid biosynthesis; glycine biosynthesis; glycine from L-serine: step 1/1. Functionally, catalyzes the reversible interconversion of serine and glycine with tetrahydrofolate (THF) serving as the one-carbon carrier. This reaction serves as the major source of one-carbon groups required for the biosynthesis of purines, thymidylate, methionine, and other important biomolecules. Also exhibits THF-independent aldolase activity toward beta-hydroxyamino acids, producing glycine and aldehydes, via a retro-aldol mechanism. The sequence is that of Serine hydroxymethyltransferase from Coxiella burnetii (strain RSA 493 / Nine Mile phase I).